An 822-amino-acid chain; its full sequence is MTSRFGQLTYTSFDAVGTVGGWQVKETTDALTSEETQLMLAGVRTVFRTVEPMPDYPTPEQLEAAPRRLAYSRVGETYAALWHTVPAGADSTGRPGNVFAHVLLDRTPDVAPRHRAIQWWRSPHWLCPYGATSVSRAALAEPGPEPGGVVTKDSVVAFALDTTTWRLATLFGLLDAVAAALDGGAPVVLGVESPDNAAQWIGLLSFLMSPGTAAQLSFSTFDRADQLNLHGGQVLSAVPLEDLSAVPAGMAAISEAETLSLGELGGEPHRTAGGYAIDVTPWSAMAQVVLLDPGSARRLLDDIDAVAEQVRDSGLHPAWPMAMAVAGRAEFADAEEEAHEVIAAHSPPGVAVGSAAARTISGVLSAVVGTTTADAWRAVQELPTGPGAVFADTTYLCRAVADDAWLSNSGPIPLGPRMFHGKPIPPPLRTAIGDALNPARGPERLLQVADLLVRAGVEDPRIRTTLVEDVVPRLRDAEARERVGADARLTLGAVLLNDGDANGTAIDDGLLDWLADTAPLPPPDELAQATPWDRTWTTAALRGVRAWRRGTGGAGRDAGALLWWLRMAGSADFEQTATASAWNPEDLLLAIGADPLPGAAAVRTLVAAADSPALNRLAAKVIDENGDSLAVACAAVRTIEPTVWLQQRYVETHQHAYVPLWDEVLSVVDPADVHPDFSTRLLAFALLGLFTGHPYPRACSGFAASDRLGGEAIERLMPLVGEGHLAPHAVVAISLLRAAAPPDPSHPDVTLDELAGHLAEQVATGMVGDDNDVEGVVAVMAQLSGDSAEPALRGYRKMVTKLMARRRDSPSLTARLRGGMQA.

In terms of biological role, may be involved in assembly of the ESX-1 / type VII specialized secretion system (T7SS), which exports several proteins including EsxA and EsxB. Involved in DNA conjugation in recipient (MKD8) but not donor (mc(2)155) strain. This is Putative ESX-1 scaffolding and assembly protein SaeB (saeB) from Mycolicibacterium smegmatis (strain MKD8) (Mycobacterium smegmatis).